Consider the following 294-residue polypeptide: Cell division control protein 2 homolog A (294 aa).

One can recognise a Protein kinase domain in the interval 4–287 (YEKVEKIGEG…ARNALQHEYF (284 aa)). ATP contacts are provided by residues 10-18 (IGEGTYGVV) and Lys-33. A Phosphothreonine modification is found at Thr-14. Phosphotyrosine is present on Tyr-15. The active-site Proton acceptor is Asp-127. Thr-161 carries the post-translational modification Phosphothreonine; by CAK.

This sequence belongs to the protein kinase superfamily. CMGC Ser/Thr protein kinase family. CDC2/CDKX subfamily.

The catalysed reaction is L-seryl-[protein] + ATP = O-phospho-L-seryl-[protein] + ADP + H(+). The enzyme catalyses L-threonyl-[protein] + ATP = O-phospho-L-threonyl-[protein] + ADP + H(+). It catalyses the reaction [DNA-directed RNA polymerase] + ATP = phospho-[DNA-directed RNA polymerase] + ADP + H(+). Its activity is regulated as follows. Phosphorylation at Thr-14 or Tyr-15 inactivates the enzyme, while phosphorylation at Thr-161 activates it. In terms of biological role, plays a key role in the control of the eukaryotic cell cycle. This Antirrhinum majus (Garden snapdragon) protein is Cell division control protein 2 homolog A (CDC2A).